The sequence spans 227 residues: MAYPFQLGLQDATSPIMEELTNFHDHTLMIVFLISSLVLYLISLMLTTKLIHTNTMDAQEVETVWTILPAIILIMIALPSLRILYLMDEINNPVLTVKTMGHQWYWSYEYTDYEDLCFDSYMTPTNELKPGELRLLEVDNRVVLPMELPIRMLISSEDVLHSWAVPSLGLKTDAIPGRLNQATITSNRPGVFYGQCSEICGSNHSFMPIVLEMIPLKLFENWSTSMI.

The Mitochondrial intermembrane portion of the chain corresponds to 1-14 (MAYPFQLGLQDATS). The helical transmembrane segment at 15 to 45 (PIMEELTNFHDHTLMIVFLISSLVLYLISLM) threads the bilayer. Over 46-59 (LTTKLIHTNTMDAQ) the chain is Mitochondrial matrix. Residues 60–87 (EVETVWTILPAIILIMIALPSLRILYLM) form a helical membrane-spanning segment. Topologically, residues 88-227 (DEINNPVLTV…LFENWSTSMI (140 aa)) are mitochondrial intermembrane. Cu cation contacts are provided by His161, Cys196, Glu198, Cys200, His204, and Met207. Position 198 (Glu198) interacts with Mg(2+).

It belongs to the cytochrome c oxidase subunit 2 family. Component of the cytochrome c oxidase (complex IV, CIV), a multisubunit enzyme composed of 14 subunits. The complex is composed of a catalytic core of 3 subunits MT-CO1, MT-CO2 and MT-CO3, encoded in the mitochondrial DNA, and 11 supernumerary subunits COX4I, COX5A, COX5B, COX6A, COX6B, COX6C, COX7A, COX7B, COX7C, COX8 and NDUFA4, which are encoded in the nuclear genome. The complex exists as a monomer or a dimer and forms supercomplexes (SCs) in the inner mitochondrial membrane with NADH-ubiquinone oxidoreductase (complex I, CI) and ubiquinol-cytochrome c oxidoreductase (cytochrome b-c1 complex, complex III, CIII), resulting in different assemblies (supercomplex SCI(1)III(2)IV(1) and megacomplex MCI(2)III(2)IV(2)). Found in a complex with TMEM177, COA6, COX18, COX20, SCO1 and SCO2. Interacts with TMEM177 in a COX20-dependent manner. Interacts with COX20. Interacts with COX16. Cu cation is required as a cofactor.

The protein localises to the mitochondrion inner membrane. It carries out the reaction 4 Fe(II)-[cytochrome c] + O2 + 8 H(+)(in) = 4 Fe(III)-[cytochrome c] + 2 H2O + 4 H(+)(out). Component of the cytochrome c oxidase, the last enzyme in the mitochondrial electron transport chain which drives oxidative phosphorylation. The respiratory chain contains 3 multisubunit complexes succinate dehydrogenase (complex II, CII), ubiquinol-cytochrome c oxidoreductase (cytochrome b-c1 complex, complex III, CIII) and cytochrome c oxidase (complex IV, CIV), that cooperate to transfer electrons derived from NADH and succinate to molecular oxygen, creating an electrochemical gradient over the inner membrane that drives transmembrane transport and the ATP synthase. Cytochrome c oxidase is the component of the respiratory chain that catalyzes the reduction of oxygen to water. Electrons originating from reduced cytochrome c in the intermembrane space (IMS) are transferred via the dinuclear copper A center (CU(A)) of subunit 2 and heme A of subunit 1 to the active site in subunit 1, a binuclear center (BNC) formed by heme A3 and copper B (CU(B)). The BNC reduces molecular oxygen to 2 water molecules using 4 electrons from cytochrome c in the IMS and 4 protons from the mitochondrial matrix. This Gerbillurus vallinus (Brush-tailed hairy-footed gerbil) protein is Cytochrome c oxidase subunit 2 (MT-CO2).